A 1712-amino-acid chain; its full sequence is Probable ATP-dependent RNA helicase DDX60 (1712 aa).

Residues 772-939 (LDVVDKNESA…WLQSVKWYWK (168 aa)) form the Helicase ATP-binding domain. 785 to 792 (APTSSGKT) provides a ligand contact to ATP. Positions 889 to 892 (DEVH) match the DEVH box motif. Residues 1226–1370 (YADQKAVDTE…HFPLSITLVL (145 aa)) form the Helicase C-terminal domain.

The protein belongs to the helicase family. In terms of assembly, interacts with EXOSC1, EXOSC4, RIGI, IFIH1/MDA5 and DHX58/LGP2. In terms of tissue distribution, brain, lymph node, prostate, stomach, thyroid, tongue, trachea, uterus, skeletal muscle, spleen, kidney, liver and small intestine.

It localises to the cytoplasm. It carries out the reaction ATP + H2O = ADP + phosphate + H(+). In terms of biological role, positively regulates RIGI- and IFIH1/MDA5-dependent type I interferon and interferon inducible gene expression in response to viral infection. Binds ssRNA, dsRNA and dsDNA and can promote the binding of RIGI to dsRNA. Exhibits antiviral activity against hepatitis C virus and vesicular stomatitis virus (VSV). The polypeptide is Probable ATP-dependent RNA helicase DDX60 (DDX60) (Homo sapiens (Human)).